We begin with the raw amino-acid sequence, 213 residues long: Hemolysin-3 homolog (213 aa).

A run of 7 helical transmembrane segments spans residues 11–31 (AITH…LIIF), 41–61 (IVSF…STLL), 75–95 (IIDH…FLLG), 103–123 (FTLL…KIFF), 127–147 (FILL…IAVK), 157–177 (GFSL…FYIW), and 185–205 (AIWH…VLFY).

The protein belongs to the UPF0073 (Hly-III) family.

It localises to the cell membrane. The polypeptide is Hemolysin-3 homolog (yplQ) (Bacillus subtilis (strain 168)).